Here is a 369-residue protein sequence, read N- to C-terminus: Peptide chain release factor 2 (369 aa).

Q249 is subject to N5-methylglutamine.

This sequence belongs to the prokaryotic/mitochondrial release factor family. In terms of processing, methylated by PrmC. Methylation increases the termination efficiency of RF2.

Its subcellular location is the cytoplasm. Peptide chain release factor 2 directs the termination of translation in response to the peptide chain termination codons UGA and UAA. The protein is Peptide chain release factor 2 of Thermosipho africanus (strain TCF52B).